Reading from the N-terminus, the 384-residue chain is DNA dC-&gt;dU-editing enzyme APOBEC-3G (384 aa).

The essential for cytoplasmic localization stretch occupies residues Met1–Ser60. CMP/dCMP-type deaminase domains are found at residues His29 to Leu138 and Gly214 to Leu328. The residue at position 32 (Thr32) is a Phosphothreonine; by PKA. Positions 65, 97, and 100 each coordinate Zn(2+). The tract at residues Glu209–Ser336 is necessary for homooligomerization. Residues Arg213–Arg215 form an interaction with DNA region. Thr218 bears the Phosphothreonine; by PKA and CAMK2 mark. His257 is a Zn(2+) binding site. Catalysis depends on Glu259, which acts as the Proton donor. Zn(2+)-binding residues include Cys288 and Cys291. The tract at residues Arg313–Arg320 is interaction with DNA.

It belongs to the cytidine and deoxycytidylate deaminase family. As to quaternary structure, homodimer. Homooligomer. Can bind RNA to form ribonucleoprotein complexes of high-molecular-mass (HMM) or low-molecular-mass (LMM). HMM is inactive and heterogeneous in protein composition because of binding nonselectively to cellular RNAs, which in turn are associated with variety of cellular proteins. The LMM form which is enzymatically active has few or no RNAs associated. Its ability to form homooligomer is distinct from its ability to assemble into HMM. Interacts with APOBEC3B, APOBEC3F, MOV10, AGO2, EIF4E, EIF4ENIF1, DCP2 and DDX6 in an RNA-dependent manner. Interacts with AGO1, AGO3 and PKA/PRKACA. The cofactor is Zn(2+).

It is found in the cytoplasm. The protein resides in the nucleus. Its subcellular location is the P-body. The enzyme catalyses a 2'-deoxycytidine in single-stranded DNA + H2O + H(+) = a 2'-deoxyuridine in single-stranded DNA + NH4(+). DNA deaminase (cytidine deaminase) which acts as an inhibitor of retrovirus replication and retrotransposon mobility via deaminase-dependent and -independent mechanisms. Exhibits antiviral activity against vif-deficient: HIV-1 and simian immunodeficiency viruses (SIVs) and also against simian foamy virus (SFV). After the penetration of retroviral nucleocapsids into target cells of infection and the initiation of reverse transcription, it can induce the conversion of cytosine to uracil in the minus-sense single-strand viral DNA, leading to G-to-A hypermutations in the subsequent plus-strand viral DNA. The resultant detrimental levels of mutations in the proviral genome, along with a deamination-independent mechanism that works prior to the proviral integration, together exert efficient antiretroviral effects in infected target cells. Selectively targets single-stranded DNA and does not deaminate double-stranded DNA or single- or double-stranded RNA. May inhibit the mobility of LTR retrotransposons. This is DNA dC-&gt;dU-editing enzyme APOBEC-3G (APOBEC3G) from Pan troglodytes (Chimpanzee).